A 75-amino-acid polypeptide reads, in one-letter code: Endogenous retrovirus group K member 7 Np9 protein (75 aa).

Residues P24–K43 form a disordered region. The segment covering T32 to K43 has biased composition (basic and acidic residues).

The protein resides in the nucleus. Functionally, may possess a function in tumorigenesis. This is Endogenous retrovirus group K member 7 Np9 protein (ERVK-7) from Homo sapiens (Human).